The following is a 294-amino-acid chain: Ribosomal RNA small subunit methyltransferase A (294 aa).

S-adenosyl-L-methionine contacts are provided by Asn31, Leu33, Gly58, Glu79, Asp104, and Asn129.

Belongs to the class I-like SAM-binding methyltransferase superfamily. rRNA adenine N(6)-methyltransferase family. RsmA subfamily.

The protein localises to the cytoplasm. It carries out the reaction adenosine(1518)/adenosine(1519) in 16S rRNA + 4 S-adenosyl-L-methionine = N(6)-dimethyladenosine(1518)/N(6)-dimethyladenosine(1519) in 16S rRNA + 4 S-adenosyl-L-homocysteine + 4 H(+). Its function is as follows. Specifically dimethylates two adjacent adenosines (A1518 and A1519) in the loop of a conserved hairpin near the 3'-end of 16S rRNA in the 30S particle. May play a critical role in biogenesis of 30S subunits. The sequence is that of Ribosomal RNA small subunit methyltransferase A from Oceanobacillus iheyensis (strain DSM 14371 / CIP 107618 / JCM 11309 / KCTC 3954 / HTE831).